The primary structure comprises 364 residues: DNA replication and repair protein RecF (364 aa).

30–37 (GENAQGKT) contacts ATP.

This sequence belongs to the RecF family.

The protein resides in the cytoplasm. Its function is as follows. The RecF protein is involved in DNA metabolism; it is required for DNA replication and normal SOS inducibility. RecF binds preferentially to single-stranded, linear DNA. It also seems to bind ATP. The polypeptide is DNA replication and repair protein RecF (Streptococcus suis (strain 98HAH33)).